Reading from the N-terminus, the 222-residue chain is 7-cyano-7-deazaguanine synthase (222 aa).

Position 14-24 (14-24) interacts with ATP; the sequence is FSGGQDSTTCL. 4 residues coordinate Zn(2+): Cys-192, Cys-201, Cys-204, and Cys-207.

This sequence belongs to the QueC family. In terms of assembly, homodimer. Requires Zn(2+) as cofactor.

The catalysed reaction is 7-carboxy-7-deazaguanine + NH4(+) + ATP = 7-cyano-7-deazaguanine + ADP + phosphate + H2O + H(+). Its pathway is purine metabolism; 7-cyano-7-deazaguanine biosynthesis. Functionally, catalyzes the ATP-dependent conversion of 7-carboxy-7-deazaguanine (CDG) to 7-cyano-7-deazaguanine (preQ(0)). In Clostridium acetobutylicum (strain ATCC 824 / DSM 792 / JCM 1419 / IAM 19013 / LMG 5710 / NBRC 13948 / NRRL B-527 / VKM B-1787 / 2291 / W), this protein is 7-cyano-7-deazaguanine synthase.